Consider the following 270-residue polypeptide: Glutamate 5-kinase (270 aa).

Lysine 18 contacts ATP. Serine 54, aspartate 141, and asparagine 153 together coordinate substrate. 173-174 (SD) contacts ATP.

Belongs to the glutamate 5-kinase family.

It localises to the cytoplasm. The enzyme catalyses L-glutamate + ATP = L-glutamyl 5-phosphate + ADP. It functions in the pathway amino-acid biosynthesis; L-proline biosynthesis; L-glutamate 5-semialdehyde from L-glutamate: step 1/2. Its function is as follows. Catalyzes the transfer of a phosphate group to glutamate to form L-glutamate 5-phosphate. The polypeptide is Glutamate 5-kinase (Leifsonia xyli subsp. xyli (strain CTCB07)).